Consider the following 354-residue polypeptide: Acyl-CoA-binding domain-containing protein 2 (354 aa).

A helical; Signal-anchor transmembrane segment spans residues 11-31 (VILGLIFSYLLAKLISIVVTF). A disordered region spans residues 75–96 (AEQGSSRSDSVAGDDSEEDDDW). Residues 86-96 (AGDDSEEDDDW) are compositionally biased toward acidic residues. In terms of domain architecture, ACB spans 104 to 194 (LDEAFSAATL…VTQLYPTWLD (91 aa)). An acyl-CoA contacts are provided by residues 136 to 140 (YGLYK), Lys162, and Tyr181. ANK repeat units lie at residues 265 to 294 (EGRT…DVNA) and 298 to 327 (EGQT…NTAA).

Belongs to the ACBP family. In terms of assembly, interacts (via ankyrin repeats) with HIPP26 and the ethylene-responsive element-binding proteins RAP2-3/EBP and RAP2-12. Interacts with CSE. Mostly expressed in roots and flowers, and, to a lower extent, in stems, pods and leaves (at protein level).

It localises to the cell membrane. It is found in the endoplasmic reticulum membrane. Its subcellular location is the peroxisome membrane. Functionally, binds medium- and long-chain acyl-CoA esters with very high affinity. Can interact in vitro with palmitoyl-CoA, but not with oleoyl-CoA. Binds to lead ions (Pb). May function as an intracellular carrier of acyl-CoA esters. Required for proper phospholipid and, to a lower extent, galactolipid composition. This Arabidopsis thaliana (Mouse-ear cress) protein is Acyl-CoA-binding domain-containing protein 2 (ACBP2).